A 221-amino-acid polypeptide reads, in one-letter code: Orotate phosphoribosyltransferase (221 aa).

K26 lines the 5-phospho-alpha-D-ribose 1-diphosphate pocket. 34-35 (FF) provides a ligand contact to orotate. 5-phospho-alpha-D-ribose 1-diphosphate contacts are provided by residues 72–73 (YK), R99, K100, K103, H105, and 124–132 (DDVITAGTA). T128 and R156 together coordinate orotate.

Belongs to the purine/pyrimidine phosphoribosyltransferase family. PyrE subfamily. In terms of assembly, homodimer. It depends on Mg(2+) as a cofactor.

It carries out the reaction orotidine 5'-phosphate + diphosphate = orotate + 5-phospho-alpha-D-ribose 1-diphosphate. It participates in pyrimidine metabolism; UMP biosynthesis via de novo pathway; UMP from orotate: step 1/2. Its function is as follows. Catalyzes the transfer of a ribosyl phosphate group from 5-phosphoribose 1-diphosphate to orotate, leading to the formation of orotidine monophosphate (OMP). The sequence is that of Orotate phosphoribosyltransferase from Colwellia psychrerythraea (strain 34H / ATCC BAA-681) (Vibrio psychroerythus).